A 74-amino-acid polypeptide reads, in one-letter code: Ubiquitin-like protein FUBI (74 aa).

This sequence belongs to the ubiquitin family.

The polypeptide is Ubiquitin-like protein FUBI (FAU) (Pongo abelii (Sumatran orangutan)).